The following is a 205-amino-acid chain: UPF0548 protein At2g17695 (205 aa).

The protein belongs to the UPF0548 family.

The sequence is that of UPF0548 protein At2g17695 from Arabidopsis thaliana (Mouse-ear cress).